A 320-amino-acid chain; its full sequence is Mitochondrial thiamine pyrophosphate carrier (320 aa).

Solcar repeat units lie at residues 13–106 (NTKF…LTEL), 116–202 (REFS…LKHL), and 214–309 (NENL…FCNV). A helical membrane pass occupies residues 19–39 (AVAGSVSGLVTRALISPFDVI). Residue S51 is modified to Phosphoserine. Helical transmembrane passes span 87–107 (ILSI…TELV), 122–142 (FVCG…VDVL), 173–193 (VFYK…GLQF), and 220–240 (LLCG…LDLF). A Substrate recognition motif is present at residues 241-246 (KKRLQV). A helical transmembrane segment spans residues 293–313 (ALSTGFMFFSYEFFCNVFHCM).

This sequence belongs to the mitochondrial carrier (TC 2.A.29) family. As to expression, expressed in all tissues examined except for placenta. Highest levels in colon, kidney, lung, testis, spleen, and brain.

The protein localises to the mitochondrion membrane. It carries out the reaction thiamine phosphate(out) + thiamine diphosphate(in) = thiamine phosphate(in) + thiamine diphosphate(out). In terms of biological role, mitochondrial transporter mediating uptake of thiamine diphosphate into mitochondria. It is not clear if the antiporter activity is affected by the membrane potential or by the proton electrochemical gradient. In Homo sapiens (Human), this protein is Mitochondrial thiamine pyrophosphate carrier.